Here is a 433-residue protein sequence, read N- to C-terminus: Serine/threonine-protein kinase Sgk1 (433 aa).

The disordered stretch occupies residues Gln66–Asn92. The span at Gln83–Asn92 shows a compositional bias: polar residues. Residues Phe100–Phe357 enclose the Protein kinase domain. Residues Ile106–Val114 and Lys129 contribute to the ATP site. The Proton acceptor role is filled by Asp224. In terms of domain architecture, AGC-kinase C-terminal spans Ser358 to Leu433.

The protein belongs to the protein kinase superfamily. AGC Ser/Thr protein kinase family.

It is found in the cytoplasm. Its subcellular location is the nucleus. It localises to the endoplasmic reticulum. It carries out the reaction L-seryl-[protein] + ATP = O-phospho-L-seryl-[protein] + ADP + H(+). The catalysed reaction is L-threonyl-[protein] + ATP = O-phospho-L-threonyl-[protein] + ADP + H(+). Functionally, protein kinase that may play an important role in cellular stress response. May be involved in the regulation of processes such as cell survival, neuronal excitability and renal sodium excretion. This is Serine/threonine-protein kinase Sgk1 (sgk1) from Danio rerio (Zebrafish).